The following is a 203-amino-acid chain: Peptidyl-tRNA hydrolase (203 aa).

Tyr-18 lines the tRNA pocket. His-23 (proton acceptor) is an active-site residue. Positions 69, 71, and 117 each coordinate tRNA.

Belongs to the PTH family. Monomer.

It localises to the cytoplasm. The catalysed reaction is an N-acyl-L-alpha-aminoacyl-tRNA + H2O = an N-acyl-L-amino acid + a tRNA + H(+). In terms of biological role, hydrolyzes ribosome-free peptidyl-tRNAs (with 1 or more amino acids incorporated), which drop off the ribosome during protein synthesis, or as a result of ribosome stalling. Catalyzes the release of premature peptidyl moieties from peptidyl-tRNA molecules trapped in stalled 50S ribosomal subunits, and thus maintains levels of free tRNAs and 50S ribosomes. This chain is Peptidyl-tRNA hydrolase, found in Prochlorococcus marinus subsp. pastoris (strain CCMP1986 / NIES-2087 / MED4).